The chain runs to 316 residues: Large ribosomal subunit protein uL4 (316 aa).

The interval 1–211 (MASCVVKNWQ…EQLKARWGSD (211 aa)) is large ribosomal subunit protein uL4. 2 disordered regions span residues 44 to 76 (ARQG…ARAG) and 231 to 316 (EDQA…ESDD). The segment covering 60–71 (GGRKPWKQKGTG) has biased composition (basic residues). Positions 212-316 (AAPAVLETPS…TAPAEEESDD (105 aa)) are unknown. The span at 255–270 (QTPAQPEAQENQAALQ) shows a compositional bias: low complexity. Acidic residues-rich tracts occupy residues 281–291 (EQTEEPQDPAE) and 301–316 (TVEE…ESDD).

It belongs to the universal ribosomal protein uL4 family. As to quaternary structure, part of the 50S ribosomal subunit.

One of the primary rRNA binding proteins, this protein initially binds near the 5'-end of the 23S rRNA. It is important during the early stages of 50S assembly. It makes multiple contacts with different domains of the 23S rRNA in the assembled 50S subunit and ribosome. In terms of biological role, forms part of the polypeptide exit tunnel. The polypeptide is Large ribosomal subunit protein uL4 (Synechococcus sp. (strain JA-2-3B'a(2-13)) (Cyanobacteria bacterium Yellowstone B-Prime)).